A 107-amino-acid chain; its full sequence is UPF0060 membrane protein PSHAa1175 (107 aa).

Helical transmembrane passes span 3-23 (IFGL…LPYL), 30-50 (SVWL…LLSL), 60-80 (AAYG…VDGI), and 84-104 (TWDL…MFAP).

This sequence belongs to the UPF0060 family.

The protein resides in the cell inner membrane. This chain is UPF0060 membrane protein PSHAa1175, found in Pseudoalteromonas translucida (strain TAC 125).